The primary structure comprises 468 residues: RUS family member 1 (468 aa).

The residue at position 2 (Ala2) is an N-acetylalanine. At Thr49 the chain carries Phosphothreonine. A helical membrane pass occupies residues 247-267 (LLMLPLVSGCPGFSLGCFFFL).

It belongs to the RUS1 family.

The protein resides in the membrane. The protein is RUS family member 1 of Homo sapiens (Human).